The chain runs to 358 residues: Peptide chain release factor 1 (358 aa).

Gln233 bears the N5-methylglutamine mark.

The protein belongs to the prokaryotic/mitochondrial release factor family. In terms of processing, methylated by PrmC. Methylation increases the termination efficiency of RF1.

The protein localises to the cytoplasm. In terms of biological role, peptide chain release factor 1 directs the termination of translation in response to the peptide chain termination codons UAG and UAA. This chain is Peptide chain release factor 1, found in Staphylococcus saprophyticus subsp. saprophyticus (strain ATCC 15305 / DSM 20229 / NCIMB 8711 / NCTC 7292 / S-41).